A 296-amino-acid polypeptide reads, in one-letter code: Ribosomal RNA small subunit methyltransferase A (296 aa).

S-adenosyl-L-methionine is bound by residues Asn40, Val42, Gly67, Glu88, Asp118, and Asn137.

It belongs to the class I-like SAM-binding methyltransferase superfamily. rRNA adenine N(6)-methyltransferase family. RsmA subfamily.

The protein localises to the cytoplasm. The catalysed reaction is adenosine(1518)/adenosine(1519) in 16S rRNA + 4 S-adenosyl-L-methionine = N(6)-dimethyladenosine(1518)/N(6)-dimethyladenosine(1519) in 16S rRNA + 4 S-adenosyl-L-homocysteine + 4 H(+). Functionally, specifically dimethylates two adjacent adenosines (A1518 and A1519) in the loop of a conserved hairpin near the 3'-end of 16S rRNA in the 30S particle. May play a critical role in biogenesis of 30S subunits. In Rhodococcus opacus (strain B4), this protein is Ribosomal RNA small subunit methyltransferase A.